A 121-amino-acid polypeptide reads, in one-letter code: Ribonuclease P protein component (121 aa).

It belongs to the RnpA family. Consists of a catalytic RNA component (M1 or rnpB) and a protein subunit.

It carries out the reaction Endonucleolytic cleavage of RNA, removing 5'-extranucleotides from tRNA precursor.. RNaseP catalyzes the removal of the 5'-leader sequence from pre-tRNA to produce the mature 5'-terminus. It can also cleave other RNA substrates such as 4.5S RNA. The protein component plays an auxiliary but essential role in vivo by binding to the 5'-leader sequence and broadening the substrate specificity of the ribozyme. The sequence is that of Ribonuclease P protein component from Neisseria meningitidis serogroup B (strain ATCC BAA-335 / MC58).